Consider the following 418-residue polypeptide: Ankyrin repeat and SOCS box protein 6 (418 aa).

6 ANK repeats span residues 65–95 (EGVSNALLKMAELGLTRAAAVLLQSGANLNF), 100–129 (TYYTALHIAVLRNQPDMVELLVRHGADINR), 134–164 (HESSPLDLASEEPERLPCLQRLLDLGADVNA), 168–203 (NGKTALLHALASSDGVQIHNTENIRLLLEGGADVKA), 224–253 (CGDKEEAPMINRFCFQVTQLLLAHGADPSE), and 258–287 (ESLTHICLKSFKLHFPLLCFLLESGAAYNC). The region spanning 358-413 (ALHASLRQLESYPPPLKHLCRVSIRLCLRPWPVDTKVKALPLPDRLKWYLLSAHSD) is the SOCS box domain.

Belongs to the ankyrin SOCS box (ASB) family. Binds APS. Identified in a complex with ELOB and ELOC. Interacts with CUL5 and RNF7. Interacts with SQSTM1. Detected in adipocytes.

Its subcellular location is the cytoplasm. It functions in the pathway protein modification; protein ubiquitination. In terms of biological role, probable substrate-recognition component of a SCF-like ECS (Elongin-Cullin-SOCS-box protein) E3 ubiquitin-protein ligase complex which mediates the ubiquitination and subsequent proteasomal degradation of target proteins. May play a role in the regulation of cell proliferation and autophagy by promoting the ubiquitination and degradation of SQSTM1. In Mus musculus (Mouse), this protein is Ankyrin repeat and SOCS box protein 6 (Asb6).